Consider the following 310-residue polypeptide: Deoxypodophyllotoxin synthase (310 aa).

The Fe2OG dioxygenase domain maps to 159 to 258 (STNYLLHFMR…RLSTSSFSFP (100 aa)). Residues H184, D186, and H239 each contribute to the Fe cation site. R249 is a 2-oxoglutarate binding site.

Belongs to the iron/ascorbate-dependent oxidoreductase family. Requires Fe(2+) as cofactor. Mostly expressed in leaves and stems.

It catalyses the reaction (-)-yatein + 2-oxoglutarate + O2 = (-)-deoxypodophyllotoxin + succinate + CO2 + H2O. Its pathway is aromatic compound metabolism; phenylpropanoid biosynthesis. 2-oxoglutarate-dependent dioxygenase involved in the biosynthesis of etoposide, a chemotherapeutic compound of the topoisomerase inhibitor family. Catalyzes the conversion of yatein to deoxypodophyllotoxin. Can also use, to some extent, demethylyatein as substrate. The protein is Deoxypodophyllotoxin synthase of Sinopodophyllum hexandrum (Himalayan may apple).